We begin with the raw amino-acid sequence, 211 residues long: Proteasome subunit beta (211 aa).

Residues 1–8 constitute a propeptide, removed in mature form; by autocatalysis; it reads MNQTLETG. T9 (nucleophile) is an active-site residue.

It belongs to the peptidase T1B family. The 20S proteasome core is composed of 14 alpha and 14 beta subunits that assemble into four stacked heptameric rings, resulting in a barrel-shaped structure. The two inner rings, each composed of seven catalytic beta subunits, are sandwiched by two outer rings, each composed of seven alpha subunits. The catalytic chamber with the active sites is on the inside of the barrel. Has a gated structure, the ends of the cylinder being occluded by the N-termini of the alpha-subunits. Is capped at one or both ends by the proteasome regulatory ATPase, PAN.

The protein localises to the cytoplasm. It catalyses the reaction Cleavage of peptide bonds with very broad specificity.. With respect to regulation, the formation of the proteasomal ATPase PAN-20S proteasome complex, via the docking of the C-termini of PAN into the intersubunit pockets in the alpha-rings, triggers opening of the gate for substrate entry. Interconversion between the open-gate and close-gate conformations leads to a dynamic regulation of the 20S proteasome proteolysis activity. In terms of biological role, component of the proteasome core, a large protease complex with broad specificity involved in protein degradation. The T.acidophilum proteasome is able to cleave oligopeptides after Tyr, Leu, Phe, and to a lesser extent after Glu and Arg. Thus, displays chymotrypsin-like activity and low level of caspase-like and trypsin-like activities. This is Proteasome subunit beta from Thermoplasma acidophilum (strain ATCC 25905 / DSM 1728 / JCM 9062 / NBRC 15155 / AMRC-C165).